The following is a 117-amino-acid chain: Large ribosomal subunit protein bL19 (117 aa).

The protein belongs to the bacterial ribosomal protein bL19 family.

In terms of biological role, this protein is located at the 30S-50S ribosomal subunit interface and may play a role in the structure and function of the aminoacyl-tRNA binding site. In Phocaeicola vulgatus (strain ATCC 8482 / DSM 1447 / JCM 5826 / CCUG 4940 / NBRC 14291 / NCTC 11154) (Bacteroides vulgatus), this protein is Large ribosomal subunit protein bL19.